A 128-amino-acid polypeptide reads, in one-letter code: Probable heavy metal-dependent transcriptional regulator HI_0293 (128 aa).

The region spanning 1-69 (MNISEAAKLV…LHQIAQLLAL (69 aa)) is the HTH merR-type domain. Residues 4 to 23 (SEAAKLVGLSTKQIRDYEKM) constitute a DNA-binding region (H-T-H motif).

The protein resides in the cytoplasm. Functionally, could be a copper-dependent transcriptional activator of the ATPase HI_0290. This chain is Probable heavy metal-dependent transcriptional regulator HI_0293, found in Haemophilus influenzae (strain ATCC 51907 / DSM 11121 / KW20 / Rd).